The primary structure comprises 195 residues: Obelin (195 aa).

A propeptide spanning residues 1–6 (MSSKYA) is cleaved from the precursor. EF-hand domains lie at 17–52 (RWIKRHKHMFDFLDINGNGKITLDEIVSKASDDICA), 53–88 (KLEATPEQTKRHQVCVEAFFRGCGMEYGKEIAFPQF), 110–145 (LIREWGDAVFDIFDKDGSGTITLDEWKAYGKISGIS), and 146–181 (PSQEDCEATFRHCDLDNSGDLDVDEMTRQHLGFWYT). 5 residues coordinate Ca(2+): aspartate 30, asparagine 32, asparagine 34, lysine 36, and glutamate 41. Ca(2+) is bound by residues aspartate 123, aspartate 125, serine 127, threonine 129, glutamate 134, aspartate 159, aspartate 161, serine 163, aspartate 165, and glutamate 170.

This sequence belongs to the aequorin family.

In terms of biological role, ca(2+)-dependent bioluminescence photoprotein. Displays an emission peak at 470 nm (blue light). Trace amounts of calcium ion trigger the intramolecular oxidation of the chromophore, coelenterazine into coelenteramide and CO(2) with the concomitant emission of light. The polypeptide is Obelin (Obelia longissima (Black sea hydrozoan)).